We begin with the raw amino-acid sequence, 2486 residues long: Nonribosomal peptide synthetase nanA (2486 aa).

The tract at residues 231–637 (FSARQPLSPA…GRRGTQVKLR (407 aa)) is adenylation 1. The 75-residue stretch at 786-860 (TDIELKVHAL…DLARSAKETS (75 aa)) folds into the Carrier 1 domain. O-(pantetheine 4'-phosphoryl)serine is present on S820. Positions 902 to 1314 (EDAYPCTPLQ…LKSVPRVSSQ (413 aa)) are condensation 1. An adenylation 2 region spans residues 1339–1735 (RAQARKTPLA…GRIGDQMKIR (397 aa)). Carrier domains lie at 1872 to 1948 (PPST…SSAS) and 2404 to 2480 (SSSE…QTQA). O-(pantetheine 4'-phosphoryl)serine occurs at positions 1909 and 2441. Positions 2404–2480 (SSSETIVEPL…KLARLLQTQA (77 aa)) are condensation 2.

The protein belongs to the NRP synthetase family.

It participates in secondary metabolite biosynthesis. Functionally, nonribosomal peptide synthetase; part of the gene cluster that mediates the biosynthesis of the benzazepine alkaloid nanangelenin A which contains an unprecedented 3,4-dihydro-1-benzazepine-2,5-dione-N-prenyl-N-acetoxy-anthranilamide scaffold. The first step of nanangelenin biosynthesis is catalyzed by the indoleamine 2,3-dioxygenase nanC which produces N-formyl-kynurenine through the catabolism of tryptophan. The two-module NRPS nanA then utilizes anthranilate (Ant) and L-kynurenine (L-Kyn) to assemble the dipeptide product nanangelenin B. The first adenylation domain of nanA (A1) loads anthranilate onto the T1 domain, while A2 loads kynurenine, generated through spontaneous nonenzymatic deformylation of the nanC-supplied N-formyl-kynurenine. The peptide bond formation between the tethered amino acids is catalyzed by the first condensation domain (C1) between anthranilate's carbonyl carbon and kynurenine's aliphatic primary amine. The second C domain (C2) catalyzes the final cyclization event between the aromatic amine of kynurenine and the tethered carbonyl carbon, yielding nanangelenin B. The terminal T3 domain enhances the catalytic efficiency of C2, suggesting the T2-tethered Ant-L-Kyn is transferred to T3 prior to cyclization by C2. Once released from nanA, nanangelenin B is then prenylated by the prenyltransferase nanD to form nanangelenin C. Nanangelenin C is then N-hydroxylated by the FAD-dependent monooxygenase nanF and further acetylated by the acetyltransferase nanB to yield nanangelenin F. Finally, the N-methyltransferase nanE methylates the amide nitrogen of 1-benzazepine to convert nanangelenin F into nanangelenin A. NanE is also able to methylate most of the intermediates of the pathway such as nanangelenin B and nanangelenin C to produce nanangelenin D and nanangelenin E, respectively. The polypeptide is Nonribosomal peptide synthetase nanA (Aspergillus nanangensis).